The following is a 1489-amino-acid chain: Chromosome partition protein MukB (1489 aa).

Residue 34-41 coordinates ATP; the sequence is GGNGAGKS. 7 coiled-coil regions span residues 326–418, 444–472, 509–602, 780–805, 835–919, 977–1116, and 1209–1266; these read LEAD…QYNQ, LETF…QTAH, RHLA…QRAP, RAAR…ATLS, EAEI…GNQL, EMLS…AKAG, and VEAI…QNVS. A flexible hinge region spans residues 666–783; the sequence is PGGSEDSRLN…TVPIFGRAAR (118 aa).

The protein belongs to the SMC family. MukB subfamily. As to quaternary structure, homodimerization via its hinge domain. Binds to DNA via its C-terminal region. Interacts, and probably forms a ternary complex, with MukE and MukF via its C-terminal region. The complex formation is stimulated by calcium or magnesium. Interacts with tubulin-related protein FtsZ.

The protein localises to the cytoplasm. It localises to the nucleoid. Its function is as follows. Plays a central role in chromosome condensation, segregation and cell cycle progression. Functions as a homodimer, which is essential for chromosome partition. Involved in negative DNA supercoiling in vivo, and by this means organize and compact chromosomes. May achieve or facilitate chromosome segregation by condensation DNA from both sides of a centrally located replisome during cell division. This is Chromosome partition protein MukB from Citrobacter koseri (strain ATCC BAA-895 / CDC 4225-83 / SGSC4696).